The chain runs to 421 residues: NADH-dependent phenylglyoxylate dehydrogenase subunit epsilon (421 aa).

Residues 15-18, 39-40, and 279-297 contribute to the FAD site; these read SSHA, TR, and ATAQ…NAIL.

This sequence belongs to the FAD-dependent oxidoreductase family. In terms of assembly, dimer of heteropentamers composed of an alpha (PadG), a beta (PadI), a gamma (PadE), a delta (PadF) and an epsilon (PadH) subunit. Requires FAD as cofactor.

The catalysed reaction is phenylglyoxylate + NAD(+) + CoA = benzoyl-CoA + CO2 + NADH. Its activity is regulated as follows. Activated by magnesium ions and thiamine diphosphate. Functionally, involved in the anaerobic metabolism of phenylalanine and phenylacetate. Catalyzes the oxidative decarboxylation of phenylglyoxylate to benzoyl-CoA and CO(2). It can also react slowly with 2-oxo-3-methylbutanoate and use different electron acceptors such as benzyl viologen, methyl viologen, FAD or FMN, but NAD seems to be the physiological electron acceptor. Also catalyzes an isotope exchange between CO(2) and the carboxyl group which proves partial or complete reversibility of the oxidative decarboxylation reaction. The protein is NADH-dependent phenylglyoxylate dehydrogenase subunit epsilon (padH) of Aromatoleum evansii (Azoarcus evansii).